Reading from the N-terminus, the 359-residue chain is tRNA N6-adenosine threonylcarbamoyltransferase (359 aa).

Fe cation contacts are provided by His115 and His119. Substrate-binding positions include 137 to 141 (LVSGG), Asp170, Gly183, and Asn283. Residue Asp311 participates in Fe cation binding. A disordered region spans residues 328 to 359 (APDSLDIAPRSRWPLDEKSAPVFGTGRRGAKA).

The protein belongs to the KAE1 / TsaD family. Requires Fe(2+) as cofactor.

Its subcellular location is the cytoplasm. The enzyme catalyses L-threonylcarbamoyladenylate + adenosine(37) in tRNA = N(6)-L-threonylcarbamoyladenosine(37) in tRNA + AMP + H(+). Its function is as follows. Required for the formation of a threonylcarbamoyl group on adenosine at position 37 (t(6)A37) in tRNAs that read codons beginning with adenine. Is involved in the transfer of the threonylcarbamoyl moiety of threonylcarbamoyl-AMP (TC-AMP) to the N6 group of A37, together with TsaE and TsaB. TsaD likely plays a direct catalytic role in this reaction. In Brucella canis (strain ATCC 23365 / NCTC 10854 / RM-666), this protein is tRNA N6-adenosine threonylcarbamoyltransferase.